Reading from the N-terminus, the 124-residue chain is Putative RNA polymerase II transcriptional coactivator (124 aa).

Residues 1 to 61 (MSSSSSSEDE…GRLKDSDGNE (61 aa)) form a disordered region. 2 stretches are compositionally biased toward basic and acidic residues: residues 11–21 (LEKKVTKEQKK) and 39–58 (QEVK…KDSD).

This sequence belongs to the transcriptional coactivator PC4 family.

The protein localises to the nucleus. General coactivator that functions cooperatively with TAFs and mediates functional interactions between upstream activators and the general transcriptional machinery. Binds single-stranded DNA. The polypeptide is Putative RNA polymerase II transcriptional coactivator (Caenorhabditis elegans).